We begin with the raw amino-acid sequence, 357 residues long: Elongation factor Ts (357 aa).

The segment at 82-85 is involved in Mg(2+) ion dislocation from EF-Tu; that stretch reads TDFV.

This sequence belongs to the EF-Ts family.

It is found in the cytoplasm. Functionally, associates with the EF-Tu.GDP complex and induces the exchange of GDP to GTP. It remains bound to the aminoacyl-tRNA.EF-Tu.GTP complex up to the GTP hydrolysis stage on the ribosome. The chain is Elongation factor Ts from Campylobacter jejuni subsp. jejuni serotype O:23/36 (strain 81-176).